The primary structure comprises 595 residues: Arginine--tRNA ligase (595 aa).

Residues 132–142 carry the 'HIGH' region motif; sequence ANPTGPLHVGH.

The protein belongs to the class-I aminoacyl-tRNA synthetase family. Monomer.

Its subcellular location is the cytoplasm. It carries out the reaction tRNA(Arg) + L-arginine + ATP = L-arginyl-tRNA(Arg) + AMP + diphosphate. The polypeptide is Arginine--tRNA ligase (Cupriavidus taiwanensis (strain DSM 17343 / BCRC 17206 / CCUG 44338 / CIP 107171 / LMG 19424 / R1) (Ralstonia taiwanensis (strain LMG 19424))).